Reading from the N-terminus, the 975-residue chain is Ionotropic receptor 21a (975 aa).

An N-terminal signal peptide occupies residues 1 to 21 (MFKRIVLAVINLVFLIVSTTA). Asn-67, Asn-177, and Asn-355 each carry an N-linked (GlcNAc...) asparagine glycan. The chain crosses the membrane as a helical span at residues 433 to 453 (WPVWVAVILIYLLAIFPLAFS). The N-linked (GlcNAc...) asparagine glycan is linked to Asn-464. Residues 505–525 (IYWVFTIIITACYTGSIIAFI) traverse the membrane as a helical segment. 3 N-linked (GlcNAc...) asparagine glycosylation sites follow: Asn-561, Asn-586, and Asn-611. A helical transmembrane segment spans residues 708–728 (MFLLMLFGYVVALGVLISEWV). Disordered stretches follow at residues 757 to 839 (ATAG…HSLS) and 911 to 938 (SPHS…RKEM). Composition is skewed to polar residues over residues 760-777 (GSDN…TNRN) and 788-800 (VENS…NGSA). N-linked (GlcNAc...) asparagine glycans are attached at residues Asn-763 and Asn-797.

This sequence belongs to the glutamate-gated ion channel (TC 1.A.10.1) family. In terms of tissue distribution, in both female and male antenna, expressed specifically in 3 sensory neurons of flagellomere 13 segment (at protein level).

The protein resides in the cell projection. Its subcellular location is the cilium membrane. Its function is as follows. Integral part of a neural sensory system in the antenna that provides the neural basis for the response to environmental changes in temperature (thermosensation). Specifically, required for thermosensing by the cooling cell. Plays a role in heat seeking and heat-stimulated blood feeding behavior. This chain is Ionotropic receptor 21a, found in Anopheles gambiae (African malaria mosquito).